Consider the following 344-residue polypeptide: Cyclin-G2 (344 aa).

Residues 298–324 are disordered; it reads CFDGSESEDSGEDMSCGEESLSSSPPS. Positions 302-313 are enriched in acidic residues; the sequence is SESEDSGEDMSC.

Belongs to the cyclin family. Cyclin G subfamily. Highest levels in intestine. Intermediate levels in spleen, brain and kidney. Low levels in testis, stomach, pancreas, liver, salivary gland and muscle. According to PubMed:9139721 also abundant in thymus.

Its subcellular location is the cytoplasm. It is found in the nucleus. May play a role in growth regulation and in negative regulation of cell cycle progression. The protein is Cyclin-G2 (Ccng2) of Mus musculus (Mouse).